A 288-amino-acid chain; its full sequence is Coiled-coil domain-containing protein 190 (288 aa).

Residues 16–69 adopt a coiled-coil conformation; the sequence is LERKSARQAEARLSLRLQRLEIICLYHVKSLAREQRQLQKELQRLQQDIIKKRF. Residues 141–235 are disordered; sequence GERTSCFKEG…SSVDYAGSFK (95 aa). The span at 177-188 shows a compositional bias: basic and acidic residues; the sequence is HDQELSTNKTED. The segment covering 203-213 has biased composition (polar residues); it reads ANETRSENASQ.

This Mus musculus (Mouse) protein is Coiled-coil domain-containing protein 190 (Ccdc190).